The following is a 222-amino-acid chain: Kinetochore protein Spc25 (222 aa).

Positions 51-86 form a coiled coil; that stretch reads RHQRKVGKLQKVLMERREELDKRVSFIEELDRELEA.

This sequence belongs to the SPC25 family. Component of the Ndc80 complex, which is composed of Ndc80, Nuf2 and Spc25.

Its subcellular location is the nucleus. The protein resides in the chromosome. It is found in the centromere. It localises to the kinetochore. Its function is as follows. Acts as a component of the essential kinetochore-associated Ndc80 complex, which is required for chromosome segregation and spindle checkpoint activity during meiosis and mitosis. Required for kinetochore integrity and the organization of stable microtubule binding sites in the outer plate of the kinetochore. Participates in SAC signaling that responds specifically to disruptions in spindle microtubule dynamics. The NDC80 complex synergistically enhances the affinity of the SKA1 complex for microtubules and may allow the NDC80 complex to track depolymerizing microtubules. This is Kinetochore protein Spc25 from Drosophila mauritiana (Fruit fly).